A 404-amino-acid polypeptide reads, in one-letter code: Argininosuccinate synthase (404 aa).

Residues 12-20 (AYSGGLDTS) and A40 contribute to the ATP site. Residues Y92 and S97 each coordinate L-citrulline. G122 provides a ligand contact to ATP. T124, N128, and D129 together coordinate L-aspartate. Residue N128 participates in L-citrulline binding. Residues R132, S181, S190, E266, and Y278 each contribute to the L-citrulline site.

It belongs to the argininosuccinate synthase family. Type 1 subfamily. In terms of assembly, homotetramer.

The protein localises to the cytoplasm. It catalyses the reaction L-citrulline + L-aspartate + ATP = 2-(N(omega)-L-arginino)succinate + AMP + diphosphate + H(+). It functions in the pathway amino-acid biosynthesis; L-arginine biosynthesis; L-arginine from L-ornithine and carbamoyl phosphate: step 2/3. The chain is Argininosuccinate synthase from Photorhabdus laumondii subsp. laumondii (strain DSM 15139 / CIP 105565 / TT01) (Photorhabdus luminescens subsp. laumondii).